We begin with the raw amino-acid sequence, 346 residues long: Small ribosomal subunit biogenesis GTPase RsgA (346 aa).

The disordered stretch occupies residues 1–26 (MAKRKLTQNQTRRIQSNNAKTLHRHK). Over residues 7–20 (TQNQTRRIQSNNAK) the composition is skewed to polar residues. In terms of domain architecture, CP-type G spans 103 to 271 (ENEISRPDYY…LIDSPGIREF (169 aa)). Residues 159 to 162 (NKVD) and 213 to 221 (GQSGVGKSS) contribute to the GTP site. Residues cysteine 295, cysteine 300, histidine 302, and cysteine 308 each contribute to the Zn(2+) site.

The protein belongs to the TRAFAC class YlqF/YawG GTPase family. RsgA subfamily. As to quaternary structure, monomer. Associates with 30S ribosomal subunit, binds 16S rRNA. Requires Zn(2+) as cofactor.

It is found in the cytoplasm. Its function is as follows. One of several proteins that assist in the late maturation steps of the functional core of the 30S ribosomal subunit. Helps release RbfA from mature subunits. May play a role in the assembly of ribosomal proteins into the subunit. Circularly permuted GTPase that catalyzes slow GTP hydrolysis, GTPase activity is stimulated by the 30S ribosomal subunit. The chain is Small ribosomal subunit biogenesis GTPase RsgA from Haemophilus influenzae (strain 86-028NP).